A 275-amino-acid polypeptide reads, in one-letter code: Nitrogenase iron protein (275 aa).

9–16 (GKGGIGKS) contacts ATP. Residue Cys-97 participates in [4Fe-4S] cluster binding. Residue Arg-100 is modified to ADP-ribosylarginine; by dinitrogenase reductase ADP-ribosyltransferase. Cys-132 is a [4Fe-4S] cluster binding site.

This sequence belongs to the NifH/BchL/ChlL family. As to quaternary structure, homodimer. [4Fe-4S] cluster is required as a cofactor. Post-translationally, the reversible ADP-ribosylation of Arg-100 inactivates the nitrogenase reductase and regulates nitrogenase activity.

The enzyme catalyses N2 + 8 reduced [2Fe-2S]-[ferredoxin] + 16 ATP + 16 H2O = H2 + 8 oxidized [2Fe-2S]-[ferredoxin] + 2 NH4(+) + 16 ADP + 16 phosphate + 6 H(+). Functionally, the key enzymatic reactions in nitrogen fixation are catalyzed by the nitrogenase complex, which has 2 components: the iron protein and the molybdenum-iron protein. The polypeptide is Nitrogenase iron protein (nifH) (Methanococcus maripaludis (Methanococcus deltae)).